The sequence spans 459 residues: Exodeoxyribonuclease 7 large subunit (459 aa).

This sequence belongs to the XseA family. Heterooligomer composed of large and small subunits.

It is found in the cytoplasm. The enzyme catalyses Exonucleolytic cleavage in either 5'- to 3'- or 3'- to 5'-direction to yield nucleoside 5'-phosphates.. Functionally, bidirectionally degrades single-stranded DNA into large acid-insoluble oligonucleotides, which are then degraded further into small acid-soluble oligonucleotides. The protein is Exodeoxyribonuclease 7 large subunit of Yersinia pestis bv. Antiqua (strain Antiqua).